The chain runs to 418 residues: Cell division protein FtsZ (418 aa).

Residues 27 to 31 (GGGSN), 114 to 116 (GTG), glutamate 145, lysine 149, and aspartate 193 each bind GTP. The tract at residues 386 to 418 (KNGVKGHTFGVPLPSVNEDLDEPTFLRNRNKGL) is disordered.

Belongs to the FtsZ family. Homodimer. Polymerizes to form a dynamic ring structure in a strictly GTP-dependent manner. Interacts directly with several other division proteins.

Its subcellular location is the cytoplasm. Functionally, essential cell division protein that forms a contractile ring structure (Z ring) at the future cell division site. The regulation of the ring assembly controls the timing and the location of cell division. One of the functions of the FtsZ ring is to recruit other cell division proteins to the septum to produce a new cell wall between the dividing cells. Binds GTP and shows GTPase activity. The protein is Cell division protein FtsZ of Treponema pallidum (strain Nichols).